The following is a 189-amino-acid chain: Glutathione-dependent formaldehyde-activating enzyme (189 aa).

Residues F20–D167 form the CENP-V/GFA domain. C27, C29, C48, C50, C53, C95, and C98 together coordinate Zn(2+).

Belongs to the Gfa family. It depends on Zn(2+) as a cofactor.

It catalyses the reaction S-(hydroxymethyl)glutathione = glutathione + formaldehyde. It participates in one-carbon metabolism; formaldehyde degradation; formate from formaldehyde (glutathione route): step 1/3. Catalyzes the condensation of formaldehyde and glutathione to S-hydroxymethylglutathione. The sequence is that of Glutathione-dependent formaldehyde-activating enzyme from Rhodopseudomonas palustris (strain BisB18).